A 469-amino-acid chain; its full sequence is MAPLCLRDCKAWQDAGLTLSTTSNEVCKLFDATLTQYATWKNDCTLGGIDGCLSRIKDTDPNFVMGHVAANGLELIGTGRSPRVDKELANAVRVMSDLSKSQALTEREMLHVAAVETFANGNLPKAADLWERILQNHPTDLLALKFAHDCYFYLGEQRQMRDSVARVLPYWKPGTPLSSYVKGMYSFGLLETNFYDQALKVAKEALAVDQTDSWSVHTVAHVHEMRADLDSGLAFMQETENNWKGSDMLACHVYWHWALYFIEKGDYEAALTLYDNHIAPQCFASGTMLDVVDNSSMLYRLQLEGVNVGDRWKNLLQITKSHTQDHMLIFNDLHFLMSSLGSKDEDMTRELVESMQELSKSPGENQQHGLINHLGTPLCRALIEYDRGHYDKAADLMYPIRYQILGIGGSDAQRDLFNQVLIRAAINSSSKYHQNLARCLLTERDMGRPNSPLTQRLIKKCSAGPGILG.

3 TPR repeats span residues 107-140 (REML…HPTD), 179-212 (SYVK…DQTD), and 251-284 (CHVY…QCFA).

The protein belongs to the TTC38 family.

The protein is Tetratricopeptide repeat protein 38 (ttc38) of Xenopus tropicalis (Western clawed frog).